We begin with the raw amino-acid sequence, 201 residues long: Natural cytotoxicity triggering receptor 3 (201 aa).

The signal sequence occupies residues 1 to 18 (MAWMLLLILIMVYPGSCA). Residues 19–126 (LWVSQPPEIR…VGTGNGTRLV (108 aa)) enclose the Ig-like domain. At 19–133 (LWVSQPPEIR…RLVVEKEYPQ (115 aa)) the chain is on the extracellular side. A disulfide bridge links Cys-39 with Cys-108. N-linked (GlcNAc...) asparagine glycosylation is found at Asn-42 and Asn-121. Residues 134-154 (LGAGTVLLLRAGFYAVSFLSV) traverse the membrane as a helical segment. The Cytoplasmic portion of the chain corresponds to 155-201 (AMGSTLYYQGKCLTWKGPRRQLPAVVPGPLPPPCGSSAHLLPPVPGG).

The protein belongs to the natural cytotoxicity receptor (NCR) family. Homodimer in the unliganted form. Interacts with CD3Z. Interacts with and is activated by binding to NCR3LG1. Interacts with and is activated by binding to BAG6. Interacts with and is inhibited by binding to LGALS3.

Its subcellular location is the cell membrane. Cell membrane receptor of natural killer/NK cells that is activated by binding of extracellular ligands including BAG6 and NCR3LG1. Stimulates NK cells cytotoxicity toward neighboring cells producing these ligands. It controls, for instance, NK cells cytotoxicity against tumor cells. Engagement of NCR3 by BAG6 also promotes myeloid dendritic cells (DC) maturation, both through killing DCs that did not acquire a mature phenotype, and inducing the release by NK cells of TNFA and IFNG that promote DC maturation. This chain is Natural cytotoxicity triggering receptor 3 (NCR3), found in Macaca mulatta (Rhesus macaque).